Consider the following 396-residue polypeptide: Elongation factor Tu 2 (396 aa).

The tr-type G domain maps to 10–206; the sequence is KPHCNIGTIG…TVDAYIPQPD (197 aa). A G1 region spans residues 19-26; sequence GHVDHGKT. 19–26 is a binding site for GTP; sequence GHVDHGKT. Thr-26 is a binding site for Mg(2+). The interval 60-64 is G2; that stretch reads GITIN. Residues 81 to 84 are G3; sequence DCPG. Residues 81–85 and 136–139 each bind GTP; these read DCPGH and NKVD. A G4 region spans residues 136 to 139; sequence NKVD. The interval 174–176 is G5; sequence SAK.

Belongs to the TRAFAC class translation factor GTPase superfamily. Classic translation factor GTPase family. EF-Tu/EF-1A subfamily. Monomer.

It localises to the cytoplasm. The catalysed reaction is GTP + H2O = GDP + phosphate + H(+). Its function is as follows. GTP hydrolase that promotes the GTP-dependent binding of aminoacyl-tRNA to the A-site of ribosomes during protein biosynthesis. This is Elongation factor Tu 2 from Caulobacter sp. (strain K31).